Reading from the N-terminus, the 1392-residue chain is DNA-directed RNA polymerase subunit beta' (1392 aa).

C70, C72, C85, and C88 together coordinate Zn(2+). Positions 460, 462, and 464 each coordinate Mg(2+). 4 residues coordinate Zn(2+): C810, C884, C891, and C894.

It belongs to the RNA polymerase beta' chain family. The RNAP catalytic core consists of 2 alpha, 1 beta, 1 beta' and 1 omega subunit. When a sigma factor is associated with the core the holoenzyme is formed, which can initiate transcription. It depends on Mg(2+) as a cofactor. Zn(2+) serves as cofactor.

It catalyses the reaction RNA(n) + a ribonucleoside 5'-triphosphate = RNA(n+1) + diphosphate. Functionally, DNA-dependent RNA polymerase catalyzes the transcription of DNA into RNA using the four ribonucleoside triphosphates as substrates. In Geobacter metallireducens (strain ATCC 53774 / DSM 7210 / GS-15), this protein is DNA-directed RNA polymerase subunit beta'.